The primary structure comprises 84 residues: Cell division topological specificity factor (84 aa).

This sequence belongs to the MinE family.

Its function is as follows. Prevents the cell division inhibition by proteins MinC and MinD at internal division sites while permitting inhibition at polar sites. This ensures cell division at the proper site by restricting the formation of a division septum at the midpoint of the long axis of the cell. The chain is Cell division topological specificity factor from Hydrogenovibrio crunogenus (strain DSM 25203 / XCL-2) (Thiomicrospira crunogena).